We begin with the raw amino-acid sequence, 153 residues long: Ribosomal RNA large subunit methyltransferase H (153 aa).

S-adenosyl-L-methionine contacts are provided by residues leucine 70, glycine 102, and leucine 121 to phenylalanine 126.

This sequence belongs to the RNA methyltransferase RlmH family. As to quaternary structure, homodimer.

Its subcellular location is the cytoplasm. It catalyses the reaction pseudouridine(1915) in 23S rRNA + S-adenosyl-L-methionine = N(3)-methylpseudouridine(1915) in 23S rRNA + S-adenosyl-L-homocysteine + H(+). Specifically methylates the pseudouridine at position 1915 (m3Psi1915) in 23S rRNA. The protein is Ribosomal RNA large subunit methyltransferase H of Trichlorobacter lovleyi (strain ATCC BAA-1151 / DSM 17278 / SZ) (Geobacter lovleyi).